A 554-amino-acid polypeptide reads, in one-letter code: Hedycaryol synthase (554 aa).

Residues Arg-270, Asp-307, Asp-311, Arg-449, and Asp-452 each contribute to the (2E,6E)-farnesyl diphosphate site. 2 residues coordinate Mg(2+): Asp-307 and Asp-311. A DDXXD motif motif is present at residues 307–311 (DDTYD). Asp-452, Ser-456, and Glu-460 together coordinate Mg(2+).

Belongs to the terpene synthase family. The cofactor is Mg(2+). In terms of tissue distribution, specifically expressed in flowers.

The enzyme catalyses (2E,6E)-farnesyl diphosphate + H2O = (2E,6E)-hedycaryol + diphosphate. Its pathway is secondary metabolite biosynthesis; terpenoid biosynthesis. In terms of biological role, sesquiterpene synthase that catalyzes the formation of sesquiterpenes and sesquiterpenoid alcohols. Converts farnesyl diphosphate (FPP) to hedycaryol. Hedycaryol is likely to be one of the terpenes that attract insects for pollination of Camellia brevistyla. This chain is Hedycaryol synthase, found in Camellia brevistyla.